The chain runs to 405 residues: Calsequestrin-1 (405 aa).

Residues 1-34 form the signal peptide; the sequence is MRATDRMGARAVSELRLALLFVLVLGTPRLGVQG. Tyr43 bears the Phosphotyrosine mark. Ser81 is modified (phosphoserine). A Phosphothreonine modification is found at Thr124. The residue at position 216 (Ser216) is a Phosphoserine. N-linked (GlcNAc...) asparagine glycosylation is present at Asn350. Residues 382 to 405 form a disordered region; it reads EGEINTEDDDDDDDDDDDDDDDDD.

It belongs to the calsequestrin family. As to quaternary structure, monomer; increases in response to a depletion of intracellular calcium. Homodimer. Homotetramer and homopolymer. Can form linear homooligomers. Ca(2+) ions promote oligomerization. Interacts (via C-terminal end and preferentially with the monomeric form) with STIM1; this interaction increases in response to a depletion of intracellular calcium, decreases both STIM1 aggregation and clustering, interaction of STIM1 with ORAI1 and store-operated Ca(2+) entry (SOCE) activity. Interacts with ASPH and TRDN. In terms of processing, N-glycosylated. Detected in skeletal muscle (at protein level). Detected in skeletal muscle.

The protein localises to the endoplasmic reticulum. The protein resides in the sarcoplasmic reticulum. It localises to the sarcoplasmic reticulum lumen. Its subcellular location is the sarcoplasmic reticulum membrane. It is found in the mitochondrion matrix. Calsequestrin is a high-capacity, moderate affinity, calcium-binding protein and thus acts as an internal calcium store in muscle. Calcium ions are bound by clusters of acidic residues at the protein surface, often at the interface between subunits. Can bind around 80 Ca(2+) ions. Regulates the release of lumenal Ca(2+) via the calcium release channel RYR1; this plays an important role in triggering muscle contraction. Negatively regulates store-operated Ca(2+) entry (SOCE) activity. In Mus musculus (Mouse), this protein is Calsequestrin-1 (Casq1).